A 256-amino-acid polypeptide reads, in one-letter code: Homeobox protein ceh-34 (256 aa).

The homeobox DNA-binding region spans 134 to 193 (GEETNYCFKSKSRNVLRDAYKKCQYPSVEDKRRLAQQTELSIIQVSNWFKNKRQRERAAG). The disordered stretch occupies residues 187–233 (QRERAAGQLDRSSARSNDSDDGSSGCESKPPMNIDSPAPPPLPTSFD).

This sequence belongs to the SIX/Sine oculis homeobox family. As to quaternary structure, interacts (via N-terminus) with eya-1 (via C-terminus). As to expression, shows expression only in the pharyngeal nervous system.

It localises to the nucleus. Its function is as follows. Acts as a transcription regulator. Binds to the sequence motif 5'-TCAGGTT-3'. Binds to the cis-regulatory element of proapoptotic factor egl-1 gene and together with eya-1 activates egl-1 expression to promote motor neuron M4 sister cell apoptosis. Also promotes apoptosis of I1 pharyngeal neuron sister cell. Together with eya-1, required to specify the coelomocyte fate in embryonic and postembryonic precursors. Required to establish and maintain the differentiation of all 14 classes of pharyngeal neurons. Controls the neurotransmitter signaling capacity of the neurons and is required for the expression of some neurotransmitter receptors including mgl-1, glr-2 and ser-7. Affects the neuropeptidergic identity of pharyngeal neurons. Required for the pharyngeal expression of sensory receptors gur-3, glu-7 and str-97, antimicrobial defense genes such as spp-12, gpla-1/flr-2 and htrl-1, and pan-pharyngeal nervous system genes such as kin-36. Required to establish and maintain pharyngeal nervous system architecture by ensuring correct axon and synapse organization. Required for expression of eya-1 which may act as a transcriptional cofactor to specify distinct pharyngeal neuron types. Cooperates with several homeobox proteins to specify distinct pharyngeal neuron types including unc-86 in the NSM and I1 neurons, ceh-14 in the I2 neuron, ceh-2 and pros-1 in the I3 neuron, ceh-45 in the M1 neuron, ceh-2 in the M3 neuron, ceh-28 and zag-1 in the M4 neuron, and vab-15 in the M5 neuron. The protein is Homeobox protein ceh-34 (ceh-34) of Caenorhabditis elegans.